The chain runs to 212 residues: Ribosomal RNA small subunit methyltransferase G (212 aa).

S-adenosyl-L-methionine-binding positions include Gly73, Phe78, 96–98 (ESS), 124–125 (VE), and Arg141.

The protein belongs to the methyltransferase superfamily. RNA methyltransferase RsmG family.

It is found in the cytoplasm. Functionally, specifically methylates the N7 position of a guanine in 16S rRNA. The protein is Ribosomal RNA small subunit methyltransferase G of Aster yellows witches'-broom phytoplasma (strain AYWB).